A 389-amino-acid polypeptide reads, in one-letter code: Acetate kinase (389 aa).

Asparagine 9 is a binding site for Mg(2+). Lysine 16 lines the ATP pocket. Arginine 77 contacts substrate. Aspartate 134 (proton donor/acceptor) is an active-site residue. Residues 194–198 (HLGNG), 268–270 (DFR), and 316–320 (GVGEN) contribute to the ATP site. Mg(2+) is bound at residue glutamate 370.

This sequence belongs to the acetokinase family. Homodimer. Requires Mg(2+) as cofactor. Mn(2+) is required as a cofactor.

The protein resides in the cytoplasm. The enzyme catalyses acetate + ATP = acetyl phosphate + ADP. Its pathway is metabolic intermediate biosynthesis; acetyl-CoA biosynthesis; acetyl-CoA from acetate: step 1/2. Catalyzes the formation of acetyl phosphate from acetate and ATP. Can also catalyze the reverse reaction. The sequence is that of Acetate kinase from Mycolicibacterium vanbaalenii (strain DSM 7251 / JCM 13017 / BCRC 16820 / KCTC 9966 / NRRL B-24157 / PYR-1) (Mycobacterium vanbaalenii).